A 340-amino-acid polypeptide reads, in one-letter code: Delta-aminolevulinic acid dehydratase (340 aa).

Residues Cys-134, Cys-136, and Cys-144 each coordinate Zn(2+). Lys-211 functions as the Schiff-base intermediate with substrate in the catalytic mechanism. Residues Arg-221 and Arg-233 each coordinate 5-aminolevulinate. Lys-264 (schiff-base intermediate with substrate) is an active-site residue. 5-aminolevulinate-binding residues include Ser-291 and Tyr-330.

The protein belongs to the ALAD family. As to quaternary structure, homooctamer. It depends on Zn(2+) as a cofactor.

It catalyses the reaction 2 5-aminolevulinate = porphobilinogen + 2 H2O + H(+). It functions in the pathway porphyrin-containing compound metabolism; protoporphyrin-IX biosynthesis; coproporphyrinogen-III from 5-aminolevulinate: step 1/4. Catalyzes an early step in the biosynthesis of tetrapyrroles. Binds two molecules of 5-aminolevulinate per subunit, each at a distinct site, and catalyzes their condensation to form porphobilinogen. This chain is Delta-aminolevulinic acid dehydratase (HEM2), found in Eremothecium gossypii (strain ATCC 10895 / CBS 109.51 / FGSC 9923 / NRRL Y-1056) (Yeast).